The chain runs to 1420 residues: DNA-directed RNA polymerase subunit beta' (1420 aa).

Residues C70, C72, C85, and C88 each coordinate Zn(2+). Residues D464, D466, and D468 each contribute to the Mg(2+) site. Residues C823, C897, C904, and C907 each contribute to the Zn(2+) site.

The protein belongs to the RNA polymerase beta' chain family. As to quaternary structure, the RNAP catalytic core consists of 2 alpha, 1 beta, 1 beta' and 1 omega subunit. When a sigma factor is associated with the core the holoenzyme is formed, which can initiate transcription. It depends on Mg(2+) as a cofactor. Zn(2+) is required as a cofactor.

It catalyses the reaction RNA(n) + a ribonucleoside 5'-triphosphate = RNA(n+1) + diphosphate. Its function is as follows. DNA-dependent RNA polymerase catalyzes the transcription of DNA into RNA using the four ribonucleoside triphosphates as substrates. The sequence is that of DNA-directed RNA polymerase subunit beta' from Polynucleobacter necessarius subsp. necessarius (strain STIR1).